The primary structure comprises 423 residues: Glutamyl-tRNA(Gln) amidotransferase subunit A (423 aa).

Positions 1–20 are disordered; the sequence is MSHNAFITEETIEPTDDGPL. Acidic residues predominate over residues 10-19; sequence ETIEPTDDGP. Catalysis depends on charge relay system residues Lys-28 and Ser-103. A disordered region spans residues 75–108; it reads EFGMGTTTETSAFGPTENPAAEGRVPGGSSGGSA. The active-site Acyl-ester intermediate is the Ser-127. Residues 183–206 are disordered; it reads DERDGTTREPPAGQPTYADAADGD.

Belongs to the amidase family. GatA subfamily. In terms of assembly, heterotrimer of A, B and C subunits.

The enzyme catalyses L-glutamyl-tRNA(Gln) + L-glutamine + ATP + H2O = L-glutaminyl-tRNA(Gln) + L-glutamate + ADP + phosphate + H(+). Its function is as follows. Allows the formation of correctly charged Gln-tRNA(Gln) through the transamidation of misacylated Glu-tRNA(Gln) in organisms which lack glutaminyl-tRNA synthetase. The reaction takes place in the presence of glutamine and ATP through an activated gamma-phospho-Glu-tRNA(Gln). The sequence is that of Glutamyl-tRNA(Gln) amidotransferase subunit A from Natronomonas pharaonis (strain ATCC 35678 / DSM 2160 / CIP 103997 / JCM 8858 / NBRC 14720 / NCIMB 2260 / Gabara) (Halobacterium pharaonis).